The sequence spans 345 residues: RING finger protein 228 (345 aa).

The span at 1 to 21 (MAAPASDSGGSQQSPSSSPGS) shows a compositional bias: low complexity. Positions 1–43 (MAAPASDSGGSQQSPSSSPGSREGAGVAAKGAPDCGDAGARDA) are disordered. An RING-type zinc finger spans residues 58-125 (CKICYNYFDA…PGAIACPVCR (68 aa)). Residues 159–213 (LPQDRLPPLPARLPAPAAAPPPTPAPPPPPSPAPPQPPPPPPAEDAAPGPRARPG) are disordered. Positions 163–201 (RLPPLPARLPAPAAAPPPTPAPPPPPSPAPPQPPPPPPA) are enriched in pro residues. Low complexity predominate over residues 202–213 (EDAAPGPRARPG). A run of 2 helical transmembrane segments spans residues 236 to 256 (VCVVFSFLSMVVLLFTGLIFV) and 290 to 310 (LSVASILALFSVVVTWVICWL). Residues 319–345 (AGSTGGSGGGGGPRARAAAGGARRSDT) form a disordered region. Over residues 321-331 (STGGSGGGGGP) the composition is skewed to gly residues. Residues 332–345 (RARAAAGGARRSDT) show a composition bias toward low complexity.

It is found in the membrane. The protein is RING finger protein 228 of Homo sapiens (Human).